A 213-amino-acid chain; its full sequence is Small ribosomal subunit protein eS1 (213 aa).

This sequence belongs to the eukaryotic ribosomal protein eS1 family.

This chain is Small ribosomal subunit protein eS1, found in Desulfurococcus amylolyticus (strain DSM 18924 / JCM 16383 / VKM B-2413 / 1221n) (Desulfurococcus kamchatkensis).